Consider the following 221-residue polypeptide: Beta-phosphoglucomutase (221 aa).

Asp-8 acts as the Nucleophile in catalysis. Residues Asp-8 and Asp-10 each coordinate Mg(2+). At Asp-8 the chain carries 4-aspartylphosphate. The Proton donor/acceptor role is filled by Asp-10. Residues Asp-10, Gly-46, Val-47, Arg-49, Ser-116, Lys-117, and Asn-118 each coordinate beta-D-glucose 6-phosphate. Residue Asp-170 coordinates Mg(2+).

Belongs to the HAD-like hydrolase superfamily. CbbY/CbbZ/Gph/YieH family. As to quaternary structure, monomer. It depends on Mg(2+) as a cofactor. In terms of processing, autophosphorylated.

It localises to the cytoplasm. The enzyme catalyses beta-D-glucose 1-phosphate = beta-D-glucose 6-phosphate. With respect to regulation, activated by phosphorylation. Competitively inhibited by alpha-D-galactose-1-phosphate. Catalyzes the interconversion of D-glucose 1-phosphate (G1P) and D-glucose 6-phosphate (G6P), forming beta-D-glucose 1,6-(bis)phosphate (beta-G16P) as an intermediate. The beta-phosphoglucomutase (Beta-PGM) acts on the beta-C(1) anomer of G1P. Glucose or lactose are used in preference to maltose, which is only utilized after glucose or lactose has been exhausted. It plays a key role in the regulation of the flow of carbohydrate intermediates in glycolysis and the formation of the sugar nucleotide UDP-glucose. In Lactococcus lactis subsp. lactis (strain IL1403) (Streptococcus lactis), this protein is Beta-phosphoglucomutase.